The primary structure comprises 341 residues: Brain-specific homeobox/POU domain protein 3 (341 aa).

Positions 55 to 65 (RGAEALAAVDI) match the POU-IV box motif. In terms of domain architecture, POU-specific spans 182-259 (ETETDPRELE…ILEAWLEEAE (78 aa)). Residues 277 to 336 (KKRKRTSIAAPEKRSLEAYFAVQPRPSSEKIAAIAEKLDLKKNVVRVWFCNQRQKQKRMK) constitute a DNA-binding region (homeobox).

Belongs to the POU transcription factor family. Class-4 subfamily.

It is found in the nucleus. Functionally, may play a role in specifying terminally differentiated neuronal phenotypes. The sequence is that of Brain-specific homeobox/POU domain protein 3 (BRN3) from Gallus gallus (Chicken).